The chain runs to 388 residues: UPF0229 protein BH1031 (388 aa).

The disordered stretch occupies residues 80–117 (HVGQGDGDSQVGDVIARDPSAGQQGPGKGQGAGDQPGE). Residues 103-113 (QGPGKGQGAGD) are compositionally biased toward gly residues.

The protein belongs to the UPF0229 family.

The protein is UPF0229 protein BH1031 of Halalkalibacterium halodurans (strain ATCC BAA-125 / DSM 18197 / FERM 7344 / JCM 9153 / C-125) (Bacillus halodurans).